A 190-amino-acid chain; its full sequence is Adenine phosphoribosyltransferase (190 aa).

Belongs to the purine/pyrimidine phosphoribosyltransferase family. In terms of assembly, homodimer.

The protein resides in the cytoplasm. It catalyses the reaction AMP + diphosphate = 5-phospho-alpha-D-ribose 1-diphosphate + adenine. The protein operates within purine metabolism; AMP biosynthesis via salvage pathway; AMP from adenine: step 1/1. Its function is as follows. Catalyzes a salvage reaction resulting in the formation of AMP, that is energically less costly than de novo synthesis. This chain is Adenine phosphoribosyltransferase, found in Cupriavidus necator (strain ATCC 17699 / DSM 428 / KCTC 22496 / NCIMB 10442 / H16 / Stanier 337) (Ralstonia eutropha).